A 249-amino-acid polypeptide reads, in one-letter code: ATP synthase subunit a, chloroplastic (249 aa).

The next 5 membrane-spanning stretches (helical) occupy residues 40–60 (QVLI…VLAI), 97–117 (VPFI…GALL), 136–156 (INTT…AGLS), 201–221 (LVVV…VMFL), and 222–242 (GLFT…AYIG).

This sequence belongs to the ATPase A chain family. As to quaternary structure, F-type ATPases have 2 components, CF(1) - the catalytic core - and CF(0) - the membrane proton channel. CF(1) has five subunits: alpha(3), beta(3), gamma(1), delta(1), epsilon(1). CF(0) has four main subunits: a, b, b' and c.

The protein resides in the plastid. Its subcellular location is the chloroplast thylakoid membrane. Key component of the proton channel; it plays a direct role in the translocation of protons across the membrane. The protein is ATP synthase subunit a, chloroplastic of Olimarabidopsis pumila (Dwarf rocket).